A 208-amino-acid chain; its full sequence is N-(5'-phosphoribosyl)anthranilate isomerase (208 aa).

Belongs to the TrpF family.

The enzyme catalyses N-(5-phospho-beta-D-ribosyl)anthranilate = 1-(2-carboxyphenylamino)-1-deoxy-D-ribulose 5-phosphate. It functions in the pathway amino-acid biosynthesis; L-tryptophan biosynthesis; L-tryptophan from chorismate: step 3/5. The chain is N-(5'-phosphoribosyl)anthranilate isomerase (trpF) from Pyrobaculum aerophilum (strain ATCC 51768 / DSM 7523 / JCM 9630 / CIP 104966 / NBRC 100827 / IM2).